The primary structure comprises 559 residues: Formate--tetrahydrofolate ligase (559 aa).

68 to 75 (TPAGEGKT) lines the ATP pocket.

It belongs to the formate--tetrahydrofolate ligase family.

It catalyses the reaction (6S)-5,6,7,8-tetrahydrofolate + formate + ATP = (6R)-10-formyltetrahydrofolate + ADP + phosphate. It participates in one-carbon metabolism; tetrahydrofolate interconversion. This chain is Formate--tetrahydrofolate ligase, found in Sinorhizobium fredii (strain NBRC 101917 / NGR234).